Here is a 438-residue protein sequence, read N- to C-terminus: Cyclic 2,3-diphosphoglycerate synthetase (438 aa).

The protein belongs to the cyclic 2,3-diphosphoglycerate synthetase family.

It is found in the cytoplasm. The enzyme catalyses (2R)-2,3-bisphosphoglycerate + ATP + H(+) = cyclic (2R)-2,3-bisphosphoglycerate + ADP + phosphate. Its function is as follows. Catalyzes the formation of cyclic 2,3-diphosphoglycerate (cDPG) by formation of an intramolecular phosphoanhydride bond at the expense of ATP. The sequence is that of Cyclic 2,3-diphosphoglycerate synthetase from Thermococcus gammatolerans (strain DSM 15229 / JCM 11827 / EJ3).